Here is a 360-residue protein sequence, read N- to C-terminus: Geranylgeranyl pyrophosphate synthase 9, chloroplastic (360 aa).

The N-terminal 39 residues, Met-1 to Ser-39, are a transit peptide targeting the chloroplast. Residues Lys-106, Arg-109, and His-138 each coordinate isopentenyl diphosphate. Mg(2+) contacts are provided by Asp-145 and Asp-151. Arg-156 contacts dimethylallyl diphosphate. Residue Arg-157 participates in isopentenyl diphosphate binding. Lys-245, Thr-246, Gln-283, Lys-300, and Lys-310 together coordinate dimethylallyl diphosphate.

The protein belongs to the FPP/GGPP synthase family. As to quaternary structure, monomer. No interactions with GGR. It depends on Mg(2+) as a cofactor.

The protein localises to the plastid. Its subcellular location is the chloroplast. It carries out the reaction isopentenyl diphosphate + dimethylallyl diphosphate = (2E)-geranyl diphosphate + diphosphate. The enzyme catalyses isopentenyl diphosphate + (2E)-geranyl diphosphate = (2E,6E)-farnesyl diphosphate + diphosphate. The catalysed reaction is isopentenyl diphosphate + (2E,6E)-farnesyl diphosphate = (2E,6E,10E)-geranylgeranyl diphosphate + diphosphate. It participates in isoprenoid biosynthesis; farnesyl diphosphate biosynthesis; farnesyl diphosphate from geranyl diphosphate and isopentenyl diphosphate: step 1/1. Its pathway is isoprenoid biosynthesis; geranyl diphosphate biosynthesis; geranyl diphosphate from dimethylallyl diphosphate and isopentenyl diphosphate: step 1/1. The protein operates within isoprenoid biosynthesis; geranylgeranyl diphosphate biosynthesis; geranylgeranyl diphosphate from farnesyl diphosphate and isopentenyl diphosphate: step 1/1. In terms of biological role, catalyzes the trans-addition of the three molecules of IPP onto DMAPP to form geranylgeranyl pyrophosphate. The sequence is that of Geranylgeranyl pyrophosphate synthase 9, chloroplastic (GGPPS9) from Arabidopsis thaliana (Mouse-ear cress).